Reading from the N-terminus, the 700-residue chain is Myotubularin-related protein 11 (700 aa).

Residues 1-39 (MWWGGRGQSFNIAPQKEEPEMGLSGPKSNPGNRMPEPSS) form a disordered region. Positions 201 to 644 (LETLEDWETE…PQIRFWKRCY (444 aa)) constitute a Myotubularin phosphatase domain.

This sequence belongs to the protein-tyrosine phosphatase family. Non-receptor class myotubularin subfamily.

This chain is Myotubularin-related protein 11 (Mtmr11), found in Mus musculus (Mouse).